The sequence spans 599 residues: Growth factor receptor-bound protein 10 (599 aa).

Polar residues predominate over residues 1–23; it reads MNNDINSSVESLNSACNMQSDTD. Residues 1 to 122 form a disordered region; sequence MNNDINSSVE…QPPAKHFPPG (122 aa). Low complexity predominate over residues 32–43; it reads QSASNQPSASSS. Positions 44–61 are enriched in polar residues; it reads RGQPQASPRQKMQRSQPV. Residue Ser50 is modified to Phosphoserine. A compositionally biased stretch (pro residues) spans 97-118; that stretch reads GSPPSVAPSSLPPPPSQPPAKH. Ser98 bears the Phosphoserine; by MTOR, MAPK1 and MAPK3 mark. One can recognise a Ras-associating domain in the interval 171–255; sequence LRKDVKVFSE…SKFLFRKNYA (85 aa). The 110-residue stretch at 295–404 folds into the PH domain; that stretch reads CPEIQGFLQV…WMTAFRLLKY (110 aa). Ser433 carries the post-translational modification Phosphoserine; by MTOR and PKB/AKT1. Ser436 is subject to Phosphoserine. A Phosphoserine; by MTOR, MAPK1 and MAPK3 modification is found at Ser481. The SH2 domain occupies 498–594; that stretch reads WFHGRISREE…VLPCKLKHHC (97 aa).

The protein belongs to the GRB7/10/14 family. As to quaternary structure, interacts with ligand-activated tyrosine kinase receptors, including FGFR1, INSR, IGF1R, MET and PDGFRB in a phosphotyrosine-dependent manner through the SH2 domain. Poorly binds to the EGFR. Directly interacts with MAP3K14/NIK and is recruited to the EGFR-ERBB2 complex. Interacts with GIGYF1/PERQ1 and GIGYF2/TNRC15. When unphosphorylated, interacts with AKT1 and when phosphorylated with YWHAE/14-3-3 epsilon. Interacts with NEDD4. Interacts with LRP6, thus interfering with the binding of AXIN1 to LRP6. Binds relatively non-specifically to several phosphoinositides, including PI(5)P, PI(4,5)P2, PI(3,4)P2 and PI(3,4,5)P3, with modest affinities through the PH domain. Binds to activated NRAS. In terms of processing, phosphorylated on serine residues upon EGF, FGF and PDGF stimulation.

The protein resides in the cytoplasm. With respect to regulation, phosphorylation by mTORC1 stabilizes and activates GRB10 constituting a feedback pathway by which mTORC1 inhibits INSR-dependent signaling. Functionally, adapter protein which modulates coupling of a number of cell surface receptor kinases with specific signaling pathways. Binds to, and suppress signals from, activated receptors tyrosine kinases, including the insulin (INSR) and insulin-like growth factor (IGF1R) receptors. The inhibitory effect can be achieved by 2 mechanisms: interference with the signaling pathway and increased receptor degradation. Delays and reduces AKT1 phosphorylation in response to insulin stimulation. Blocks association between INSR and IRS1 and IRS2 and prevents insulin-stimulated IRS1 and IRS2 tyrosine phosphorylation. Recruits NEDD4 to IGF1R, leading to IGF1R ubiquitination, increased internalization and degradation by both the proteasomal and lysosomal pathways. A similar role in the mediation of ubiquitination also has been suggested with INSR. Negatively regulates Wnt signaling by interacting with LRP6 intracellular portion and interfering with the binding of AXIN1 to LRP6. Positive regulator of the KDR/VEGFR-2 signaling pathway. May inhibit NEDD4-mediated degradation of KDR/VEGFR-2. The protein is Growth factor receptor-bound protein 10 (Grb10) of Rattus norvegicus (Rat).